We begin with the raw amino-acid sequence, 631 residues long: Altered inheritance of mitochondria protein 9, mitochondrial (631 aa).

Residues 1-41 (MLSRVVRQRSRSAISSFKLRAHAAFAETRIGVGISVQATRL) constitute a mitochondrion transit peptide.

This sequence belongs to the AIM9 family.

It localises to the mitochondrion. In Scheffersomyces stipitis (strain ATCC 58785 / CBS 6054 / NBRC 10063 / NRRL Y-11545) (Yeast), this protein is Altered inheritance of mitochondria protein 9, mitochondrial (AIM9).